The sequence spans 1284 residues: DNA topoisomerase 2, mitochondrial (1284 aa).

The transit peptide at 1–35 (MSKLLNNNNHKNLTNYLKFGKGIINNLNNKSKQVG) directs the protein to the mitochondrion. Residues N183, N212, 240-242 (GSN), and 253-260 (GRNGFGAK) each bind ATP. An interaction with DNA region spans residues 445–447 (KKK). 478-480 (QSK) is a binding site for ATP. Residues 560–677 (CTLIITEGDS…NLLKRGFLVE (118 aa)) enclose the Toprim domain. Mg(2+)-binding residues include E566, D646, and D648. One can recognise a Topo IIA-type catalytic domain in the interval 810-1232 (IPSLIDGLKP…DPKSLWTADL (423 aa)). The active-site O-(5'-phospho-DNA)-tyrosine intermediate is the Y900. The disordered stretch occupies residues 1245-1284 (EFQKKPLKTSSSSSFDVSSSSESAKLSSTRKSKTDKIKSK). Residues 1254–1271 (SSSSSFDVSSSSESAKLS) show a composition bias toward low complexity.

Belongs to the type II topoisomerase family. As to quaternary structure, homodimer. Mg(2+) is required as a cofactor. It depends on Mn(2+) as a cofactor. Ca(2+) serves as cofactor.

The protein localises to the mitochondrion. The catalysed reaction is ATP-dependent breakage, passage and rejoining of double-stranded DNA.. Functionally, control of topological states of DNA by transient breakage and subsequent rejoining of DNA strands. Topoisomerase II makes double-strand breaks. This is DNA topoisomerase 2, mitochondrial (top2mt) from Dictyostelium discoideum (Social amoeba).